A 208-amino-acid chain; its full sequence is ATP phosphoribosyltransferase (208 aa).

Belongs to the ATP phosphoribosyltransferase family. Short subfamily. Heteromultimer composed of HisG and HisZ subunits.

Its subcellular location is the cytoplasm. It catalyses the reaction 1-(5-phospho-beta-D-ribosyl)-ATP + diphosphate = 5-phospho-alpha-D-ribose 1-diphosphate + ATP. It functions in the pathway amino-acid biosynthesis; L-histidine biosynthesis; L-histidine from 5-phospho-alpha-D-ribose 1-diphosphate: step 1/9. Its function is as follows. Catalyzes the condensation of ATP and 5-phosphoribose 1-diphosphate to form N'-(5'-phosphoribosyl)-ATP (PR-ATP). Has a crucial role in the pathway because the rate of histidine biosynthesis seems to be controlled primarily by regulation of HisG enzymatic activity. This is ATP phosphoribosyltransferase from Thermotoga neapolitana (strain ATCC 49049 / DSM 4359 / NBRC 107923 / NS-E).